The sequence spans 1025 residues: Protein mono-ADP-ribosyltransferase PARP10 (1025 aa).

A Phosphothreonine modification is found at Thr-101. Glu-106 is subject to ADP-ribosyl glutamic acid. Lys-140 carries the N6-(ADP-ribosyl)lysine modification. The interval 318 to 346 is disordered; it reads GIMTTGSGQEPGQSGTSLRTGPMGSLGQA. Residues 321–336 show a composition bias toward polar residues; sequence TTGSGQEPGQSGTSLR. Ser-378, Ser-423, and Ser-431 each carry phosphoserine. Disordered stretches follow at residues 569-589 and 617-644; these read VLPGNAHTLWTPDSTGGDQED and LEEEGPQEQPEEEVTPGHEEEEPVAPST. Acidic residues predominate over residues 617-639; sequence LEEEGPQEQPEEEVTPGHEEEEP. Short sequence motifs (ubiquitin-interacting) lie at residues 650–667 and 673–690; these read LEEEAALQLALHRSLEPQ and QEEAAALRQALTLSLLEQ. Ser-663 bears the Phosphoserine mark. Residues 700–907 are myc binding; the sequence is DGGTDGKAQL…CAHGFNRSFC (208 aa). The 220-residue stretch at 806–1025 folds into the PARP catalytic domain; it reads PTLAGQTLKG…SGLPGRSPDT (220 aa). The PIP-box motif lies at 831 to 838; sequence QEVVRAFY. Glu-882 is subject to ADP-ribosyl glutamic acid. Lys-916 carries the N6-(ADP-ribosyl)lysine modification. Lys-916 is modified (N6-acetyllysine). Residues 1006 to 1025 form a disordered region; that stretch reads HVPRASPDDPSGLPGRSPDT. A Phosphoserine modification is found at Ser-1011.

It belongs to the ARTD/PARP family. In terms of assembly, interacts with MYC. Interacts with PARP14. Interacts (via-PIP box and ubiquitin-interacting motifs) with PCNA. Stimulated through its phosphorylation by CDK2. Acquires CDK-dependent phosphorylation through late-G1 to S phase, and from prometaphase to cytokinesis in the nucleolar organizing regions. Phosphorylation is suppressed in growth-arrested cells. In terms of processing, auto-mono-ADP-ribosylated on glutamate and lysine residues. In terms of tissue distribution, highly expressed in spleen and thymus. Intermediate levels in liver, kidney, pancreas, prostate, testis, ovary, intestine, and leukocytes. Low expression in heart, brain, placenta, lung, skeletal muscle, and colon.

The protein resides in the nucleus. The protein localises to the nucleolus. It localises to the cytoplasm. The enzyme catalyses L-lysyl-[protein] + NAD(+) = N(6)-(ADP-D-ribosyl)-L-lysyl-[protein] + nicotinamide + H(+). It catalyses the reaction L-aspartyl-[protein] + NAD(+) = 4-O-(ADP-D-ribosyl)-L-aspartyl-[protein] + nicotinamide. The catalysed reaction is L-glutamyl-[protein] + NAD(+) = 5-O-(ADP-D-ribosyl)-L-glutamyl-[protein] + nicotinamide. In terms of biological role, ADP-ribosyltransferase that mediates mono-ADP-ribosylation of glutamate and aspartate residues on target proteins. In contrast to PARP1 and PARP2, it is not able to mediate poly-ADP-ribosylation. Catalyzes mono-ADP-ribosylation of GSK3B, leading to negatively regulate GSK3B kinase activity. Involved in translesion DNA synthesis in response to DNA damage via its interaction with PCNA. The polypeptide is Protein mono-ADP-ribosyltransferase PARP10 (Homo sapiens (Human)).